Reading from the N-terminus, the 475-residue chain is Ornithine aminotransferase, mitochondrial (475 aa).

A mitochondrion-targeting transit peptide spans 1–16 (MAATTRRLLYYVSKRF). Residues 23 to 43 (RSYGGLPQSNSKSPPSSSQRL) are disordered. Over residues 29 to 41 (PQSNSKSPPSSSQ) the composition is skewed to low complexity. Pyridoxal 5'-phosphate contacts are provided by residues 142–143 (GA) and Phe177. Arg180 provides a ligand contact to L-ornithine. 265 to 268 (DEVQ) contributes to the pyridoxal 5'-phosphate binding site. The residue at position 294 (Lys294) is an N6-(pyridoxal phosphate)lysine. Ser323 lines the L-ornithine pocket. Thr324 contributes to the pyridoxal 5'-phosphate binding site.

It belongs to the class-III pyridoxal-phosphate-dependent aminotransferase family. In terms of assembly, homotetramer. It depends on pyridoxal 5'-phosphate as a cofactor.

It localises to the mitochondrion matrix. It carries out the reaction a 2-oxocarboxylate + L-ornithine = L-glutamate 5-semialdehyde + an L-alpha-amino acid. Its pathway is amino-acid biosynthesis; L-proline biosynthesis; L-glutamate 5-semialdehyde from L-ornithine: step 1/1. Mediates degradation of arginine for nitrogen recycling. Plays a role in non-host disease resistance by regulating pyrroline-5-carboxylate metabolism-induced hypersensitive response. In Arabidopsis thaliana (Mouse-ear cress), this protein is Ornithine aminotransferase, mitochondrial.